Here is a 175-residue protein sequence, read N- to C-terminus: Translation initiation factor IF-3 (175 aa).

The protein belongs to the IF-3 family. Monomer.

The protein resides in the cytoplasm. Its function is as follows. IF-3 binds to the 30S ribosomal subunit and shifts the equilibrium between 70S ribosomes and their 50S and 30S subunits in favor of the free subunits, thus enhancing the availability of 30S subunits on which protein synthesis initiation begins. This chain is Translation initiation factor IF-3, found in Staphylococcus saprophyticus subsp. saprophyticus (strain ATCC 15305 / DSM 20229 / NCIMB 8711 / NCTC 7292 / S-41).